We begin with the raw amino-acid sequence, 209 residues long: Dual specificity protein phosphatase 22 (209 aa).

One can recognise a Tyrosine-protein phosphatase domain in the interval 4–144 (GMNKILTGLF…LEDFGKCEVH (141 aa)). The active-site Phosphocysteine intermediate is Cys88. The tract at residues 169–192 (LDKHKQQEAAESQNATSSGRQWNS) is disordered. The span at 177-190 (AAESQNATSSGRQW) shows a compositional bias: polar residues.

This sequence belongs to the protein-tyrosine phosphatase family. Non-receptor class dual specificity subfamily.

It localises to the cytoplasm. Its subcellular location is the nucleus. It catalyses the reaction O-phospho-L-tyrosyl-[protein] + H2O = L-tyrosyl-[protein] + phosphate. The catalysed reaction is O-phospho-L-seryl-[protein] + H2O = L-seryl-[protein] + phosphate. The enzyme catalyses O-phospho-L-threonyl-[protein] + H2O = L-threonyl-[protein] + phosphate. In terms of biological role, activates the Jnk signaling pathway. Dephosphorylates and deactivates p38 and stress-activated protein kinase/c-Jun N-terminal kinase (SAPK/JNK). This is Dual specificity protein phosphatase 22 (dusp22) from Xenopus laevis (African clawed frog).